The primary structure comprises 79 residues: Sec-independent protein translocase protein TatA (79 aa).

The chain crosses the membrane as a helical span at residues methionine 1–phenylalanine 21. Basic and acidic residues-rich tracts occupy residues methionine 44–aspartate 58 and glutamine 66–alanine 79. Residues methionine 44–alanine 79 form a disordered region.

It belongs to the TatA/E family. The Tat system comprises two distinct complexes: a TatABC complex, containing multiple copies of TatA, TatB and TatC subunits, and a separate TatA complex, containing only TatA subunits. Substrates initially bind to the TatABC complex, which probably triggers association of the separate TatA complex to form the active translocon.

The protein resides in the cell inner membrane. Its function is as follows. Part of the twin-arginine translocation (Tat) system that transports large folded proteins containing a characteristic twin-arginine motif in their signal peptide across membranes. TatA could form the protein-conducting channel of the Tat system. The chain is Sec-independent protein translocase protein TatA from Alcanivorax borkumensis (strain ATCC 700651 / DSM 11573 / NCIMB 13689 / SK2).